Here is a 190-residue protein sequence, read N- to C-terminus: Crossover junction endodeoxyribonuclease RuvC (190 aa).

Active-site residues include Asp7, Glu68, and Asp141. Asp7, Glu68, and Asp141 together coordinate Mg(2+).

Belongs to the RuvC family. Homodimer which binds Holliday junction (HJ) DNA. The HJ becomes 2-fold symmetrical on binding to RuvC with unstacked arms; it has a different conformation from HJ DNA in complex with RuvA. In the full resolvosome a probable DNA-RuvA(4)-RuvB(12)-RuvC(2) complex forms which resolves the HJ. The cofactor is Mg(2+).

The protein resides in the cytoplasm. It catalyses the reaction Endonucleolytic cleavage at a junction such as a reciprocal single-stranded crossover between two homologous DNA duplexes (Holliday junction).. In terms of biological role, the RuvA-RuvB-RuvC complex processes Holliday junction (HJ) DNA during genetic recombination and DNA repair. Endonuclease that resolves HJ intermediates. Cleaves cruciform DNA by making single-stranded nicks across the HJ at symmetrical positions within the homologous arms, yielding a 5'-phosphate and a 3'-hydroxyl group; requires a central core of homology in the junction. The consensus cleavage sequence is 5'-(A/T)TT(C/G)-3'. Cleavage occurs on the 3'-side of the TT dinucleotide at the point of strand exchange. HJ branch migration catalyzed by RuvA-RuvB allows RuvC to scan DNA until it finds its consensus sequence, where it cleaves and resolves the cruciform DNA. This Endomicrobium trichonymphae protein is Crossover junction endodeoxyribonuclease RuvC.